A 221-amino-acid polypeptide reads, in one-letter code: Phosphoglycolate phosphatase (221 aa).

The active-site Nucleophile is the D10. Mg(2+) contacts are provided by D10, D12, and D168.

It belongs to the HAD-like hydrolase superfamily. CbbY/CbbZ/Gph/YieH family. It depends on Mg(2+) as a cofactor.

It catalyses the reaction 2-phosphoglycolate + H2O = glycolate + phosphate. Its pathway is organic acid metabolism; glycolate biosynthesis; glycolate from 2-phosphoglycolate: step 1/1. In terms of biological role, specifically catalyzes the dephosphorylation of 2-phosphoglycolate. Is involved in the dissimilation of the intracellular 2-phosphoglycolate formed during the DNA repair of 3'-phosphoglycolate ends, a major class of DNA lesions induced by oxidative stress. This is Phosphoglycolate phosphatase from Xanthomonas campestris pv. campestris (strain 8004).